Here is a 189-residue protein sequence, read N- to C-terminus: Crossover junction endodeoxyribonuclease RuvC (189 aa).

Residues D11, E71, and D143 contribute to the active site. Mg(2+) is bound by residues D11, E71, and D143.

This sequence belongs to the RuvC family. Homodimer which binds Holliday junction (HJ) DNA. The HJ becomes 2-fold symmetrical on binding to RuvC with unstacked arms; it has a different conformation from HJ DNA in complex with RuvA. In the full resolvosome a probable DNA-RuvA(4)-RuvB(12)-RuvC(2) complex forms which resolves the HJ. The cofactor is Mg(2+).

It is found in the cytoplasm. It catalyses the reaction Endonucleolytic cleavage at a junction such as a reciprocal single-stranded crossover between two homologous DNA duplexes (Holliday junction).. In terms of biological role, the RuvA-RuvB-RuvC complex processes Holliday junction (HJ) DNA during genetic recombination and DNA repair. Endonuclease that resolves HJ intermediates. Cleaves cruciform DNA by making single-stranded nicks across the HJ at symmetrical positions within the homologous arms, yielding a 5'-phosphate and a 3'-hydroxyl group; requires a central core of homology in the junction. The consensus cleavage sequence is 5'-(A/T)TT(C/G)-3'. Cleavage occurs on the 3'-side of the TT dinucleotide at the point of strand exchange. HJ branch migration catalyzed by RuvA-RuvB allows RuvC to scan DNA until it finds its consensus sequence, where it cleaves and resolves the cruciform DNA. This chain is Crossover junction endodeoxyribonuclease RuvC, found in Methylorubrum populi (strain ATCC BAA-705 / NCIMB 13946 / BJ001) (Methylobacterium populi).